We begin with the raw amino-acid sequence, 129 residues long: Small ribosomal subunit protein uS8 (129 aa).

Belongs to the universal ribosomal protein uS8 family. As to quaternary structure, part of the 30S ribosomal subunit.

One of the primary rRNA binding proteins, it binds directly to 16S rRNA central domain where it helps coordinate assembly of the platform of the 30S subunit. The chain is Small ribosomal subunit protein uS8 from Thermofilum pendens (strain DSM 2475 / Hrk 5).